Here is a 397-residue protein sequence, read N- to C-terminus: Argininosuccinate synthase (397 aa).

9 to 17 is a binding site for ATP; that stretch reads AYSGGLDTS. Residue Tyr87 coordinates L-citrulline. Residue Gly117 coordinates ATP. L-aspartate-binding residues include Thr119, Asn123, and Asp124. Asn123 provides a ligand contact to L-citrulline. The L-citrulline site is built by Arg127, Ser175, Ser184, Glu260, and Tyr272.

It belongs to the argininosuccinate synthase family. Type 1 subfamily. In terms of assembly, homotetramer.

The protein localises to the cytoplasm. It carries out the reaction L-citrulline + L-aspartate + ATP = 2-(N(omega)-L-arginino)succinate + AMP + diphosphate + H(+). It functions in the pathway amino-acid biosynthesis; L-arginine biosynthesis; L-arginine from L-ornithine and carbamoyl phosphate: step 2/3. This chain is Argininosuccinate synthase, found in Methanococcus maripaludis (strain DSM 14266 / JCM 13030 / NBRC 101832 / S2 / LL).